We begin with the raw amino-acid sequence, 328 residues long: uncharacterized protein (328 aa).

Coiled-coil stretches lie at residues 67-190 (FKEQ…VLEE) and 223-251 (MAQR…DNMM).

This is an uncharacterized protein from Mus musculus (Mouse).